The sequence spans 729 residues: Palmitoyltransferase akr1 (729 aa).

Residues 1 to 11 (MVHHDGADAHA) show a composition bias toward basic and acidic residues. The disordered stretch occupies residues 1–28 (MVHHDGADAHAGHAAPAQPPMKSDTATP). The Cytoplasmic segment spans residues 1–297 (MVHHDGADAH…DRRSFMTKFT (297 aa)). ANK repeat units follow at residues 76 to 105 (EGIT…EINK), 110 to 139 (SVAT…DPLI), 143 to 172 (QGYN…PVDV), 176 to 205 (YGHT…SVHA), and 209 to 238 (QGFT…DRFA). Helical transmembrane passes span 298-318 (FLWP…MPVF) and 319-339 (VGIP…QQVI). Over 340 to 354 (AYAPPDMRQLQKTPW) the chain is Cytoplasmic. The chain crosses the membrane as a helical span at residues 355 to 375 (MAGIFAGSLFLCIMNWLLHIF). The Lumenal portion of the chain corresponds to 376–383 (GSTMFGQD). A helical membrane pass occupies residues 384 to 404 (SAVIPNLLFAFFISMTIWFYI). The Cytoplasmic segment spans residues 405–483 (RCMVDDPGFV…YNCIGVNNHR (79 aa)). A DHHC domain is found at 440–490 (NFCVTCMIRTPLRSKHCRRCQRCVAKHDHHCPWVYNCIGVNNHRHFFFYLI). The active-site S-palmitoyl cysteine intermediate is the Cys-470. The helical transmembrane segment at 484–504 (HFFFYLINLTLSVVTYDWLTY) threads the bilayer. Residues 505-534 (RYLSTLSETASDECNILAPSLCRIVNADTY) lie on the Lumenal side of the membrane. A helical membrane pass occupies residues 535 to 555 (SLLTAIWASLQLTWVSMLLFV). The Cytoplasmic segment spans residues 556–729 (QFVQVSSAMT…GYESVAGEEV (174 aa)). Disordered regions lie at residues 587–620 (STGA…HGHN) and 709–729 (TSGG…GEEV). Positions 592–603 (LNPPSLPAPGPS) are enriched in pro residues. Basic residues predominate over residues 611-620 (HGGRHAHGHN).

Belongs to the DHHC palmitoyltransferase family. AKR/ZDHHC17 subfamily.

The protein localises to the early endosome membrane. The protein resides in the golgi apparatus membrane. The catalysed reaction is L-cysteinyl-[protein] + hexadecanoyl-CoA = S-hexadecanoyl-L-cysteinyl-[protein] + CoA. Functionally, palmitoyltransferase specific for casein kinase 1. The polypeptide is Palmitoyltransferase akr1 (ptr-1) (Neurospora crassa (strain ATCC 24698 / 74-OR23-1A / CBS 708.71 / DSM 1257 / FGSC 987)).